A 1755-amino-acid chain; its full sequence is Transposon Ty1-OL Gag-Pol polyprotein (1755 aa).

Polar residues-rich tracts occupy residues 1–23 (MESQQLSNYPQISHGSACASVTS), 48–60 (TKANSQQTTTPAS), and 127–152 (QSQFPQYPSSVGTPLSTPSPESGNTF). 3 disordered regions span residues 1-93 (MESQ…MMTQ), 126-173 (PQSQ…RPPP), and 352-421 (GSRN…SKST). Residues 153-165 (TDSSSADSDMTST) show a composition bias toward low complexity. An RNA-binding region spans residues 299–401 (NNGIHINNKV…NSKSKTARAH (103 aa)). The segment covering 402 to 418 (NVSTSNNSPSTDNDSIS) has biased composition (low complexity). At S416 the chain carries Phosphoserine. D461 functions as the For protease activity; shared with dimeric partner in the catalytic mechanism. The integrase-type zinc finger-like stretch occupies residues 583–640 (NVHTSESTRKYPYPFIHRMLAHANAQTIRYSLKNNTITYFNESDVDWSSAIDYQCPDC). An Integrase catalytic domain is found at 660–835 (NSYEPFQYLH…AGLDISTLLP (176 aa)). 2 residues coordinate Mg(2+): D671 and D736. Disordered stretches follow at residues 956–1087 (SKAV…ETEK), 1092–1111 (RSPSIDASPPENNSSHNIVP), and 1130–1171 (DLPL…DSNA). Residues 960–969 (SPTDSTPPST) are compositionally biased toward low complexity. A compositionally biased stretch (polar residues) spans 1005–1015 (STPQISNIEST). The span at 1038-1053 (ESSHASKSKDFRHSDS) shows a compositional bias: basic and acidic residues. Polar residues-rich tracts occupy residues 1054 to 1082 (YSENETNHTNVPISSTGGTNNKTVPQISD) and 1101 to 1111 (PENNSSHNIVP). The short motif at 1178–1212 (KKRSLEDNETEIKVSRDTWNTKNMRSLEPPRSKKR) is the Bipartite nuclear localization signal element. Residues 1338-1476 (NNYYITQLDI…DILGLEIKYQ (139 aa)) form the Reverse transcriptase Ty1/copia-type domain. Mg(2+) contacts are provided by D1346, D1427, D1428, D1610, E1652, and D1685. The 143-residue stretch at 1610-1752 (DASYGNQPYY…IKTFKLLTNK (143 aa)) folds into the RNase H Ty1/copia-type domain.

As to quaternary structure, the capsid protein forms a homotrimer, from which the VLPs are assembled. The protease is a homodimer, whose active site consists of two apposed aspartic acid residues. Post-translationally, initially, virus-like particles (VLPs) are composed of the structural unprocessed proteins Gag and Gag-Pol, and also contain the host initiator methionine tRNA (tRNA(i)-Met) which serves as a primer for minus-strand DNA synthesis, and a dimer of genomic Ty RNA. Processing of the polyproteins occurs within the particle and proceeds by an ordered pathway, called maturation. First, the protease (PR) is released by autocatalytic cleavage of the Gag-Pol polyprotein yielding capsid protein p45 and a Pol-p154 precursor protein. This cleavage is a prerequisite for subsequent processing of Pol-p154 at the remaining sites to release the mature structural and catalytic proteins. Maturation takes place prior to the RT reaction and is required to produce transposition-competent VLPs.

It localises to the cytoplasm. The protein localises to the nucleus. The catalysed reaction is DNA(n) + a 2'-deoxyribonucleoside 5'-triphosphate = DNA(n+1) + diphosphate. It catalyses the reaction Endonucleolytic cleavage to 5'-phosphomonoester.. Capsid protein (CA) is the structural component of the virus-like particle (VLP), forming the shell that encapsulates the retrotransposons dimeric RNA genome. The particles are assembled from trimer-clustered units and there are holes in the capsid shells that allow for the diffusion of macromolecules. CA also has nucleocapsid-like chaperone activity, promoting primer tRNA(i)-Met annealing to the multipartite primer-binding site (PBS), dimerization of Ty1 RNA and initiation of reverse transcription. Its function is as follows. The aspartyl protease (PR) mediates the proteolytic cleavages of the Gag and Gag-Pol polyproteins after assembly of the VLP. Functionally, reverse transcriptase/ribonuclease H (RT) is a multifunctional enzyme that catalyzes the conversion of the retro-elements RNA genome into dsDNA within the VLP. The enzyme displays a DNA polymerase activity that can copy either DNA or RNA templates, and a ribonuclease H (RNase H) activity that cleaves the RNA strand of RNA-DNA heteroduplexes during plus-strand synthesis and hydrolyzes RNA primers. The conversion leads to a linear dsDNA copy of the retrotransposon that includes long terminal repeats (LTRs) at both ends. In terms of biological role, integrase (IN) targets the VLP to the nucleus, where a subparticle preintegration complex (PIC) containing at least integrase and the newly synthesized dsDNA copy of the retrotransposon must transit the nuclear membrane. Once in the nucleus, integrase performs the integration of the dsDNA into the host genome. In Saccharomyces cerevisiae (strain ATCC 204508 / S288c) (Baker's yeast), this protein is Transposon Ty1-OL Gag-Pol polyprotein (TY1B-OL).